Consider the following 517-residue polypeptide: Glutamyl-tRNA(Gln) amidotransferase subunit A, mitochondrial (517 aa).

Catalysis depends on charge relay system residues Lys58 and Ser131. The segment at 106 to 132 (FGMGTHSTHSAHGPVASPAGRSAGGSS) is disordered. The active-site Acyl-ester intermediate is the Ser155.

It belongs to the amidase family. GatA subfamily. Subunit of the heterotrimeric GatCAB amidotransferase (AdT) complex, composed of A, B and C subunits.

It localises to the mitochondrion. It carries out the reaction L-glutamyl-tRNA(Gln) + L-glutamine + ATP + H2O = L-glutaminyl-tRNA(Gln) + L-glutamate + ADP + phosphate + H(+). In terms of biological role, allows the formation of correctly charged Gln-tRNA(Gln) through the transamidation of misacylated Glu-tRNA(Gln) in the mitochondria. The reaction takes place in the presence of glutamine and ATP through an activated gamma-phospho-Glu-tRNA(Gln). The chain is Glutamyl-tRNA(Gln) amidotransferase subunit A, mitochondrial from Pyricularia oryzae (strain 70-15 / ATCC MYA-4617 / FGSC 8958) (Rice blast fungus).